A 366-amino-acid chain; its full sequence is Putative RING-H2 finger protein ATL21C (366 aa).

A signal peptide spans 1–23; that stretch reads MTFSKQLFPFVFFLLFLVSLRHA. Residues 243-263 form a helical membrane-spanning segment; sequence LVLVISLSAVTVFVFPTCIAI. An RING-type; atypical zinc finger spans residues 320-362; that stretch reads CPICLSEYASKETVRFIPECDHCFHVECIDVWLKIHGSCPLCR.

It belongs to the RING-type zinc finger family. ATL subfamily.

It is found in the membrane. The enzyme catalyses S-ubiquitinyl-[E2 ubiquitin-conjugating enzyme]-L-cysteine + [acceptor protein]-L-lysine = [E2 ubiquitin-conjugating enzyme]-L-cysteine + N(6)-ubiquitinyl-[acceptor protein]-L-lysine.. It participates in protein modification; protein ubiquitination. The polypeptide is Putative RING-H2 finger protein ATL21C (ATL21C) (Arabidopsis thaliana (Mouse-ear cress)).